A 1305-amino-acid chain; its full sequence is MDSPALGAVALLLAGFWHLGLTATNYNCDGALVSTLPSSAFTSSSEFFSTHSPSFAKLNRRDGAGGWSPLDSNEQQWLQVDLGDRVEIVGVATQGRYGSSDWVTSYTLMFSDTGRNWKQYRKDDTVWVFTGNSNADSVVHHKLLHSMKARFLRFVPLKWNVGGHIGLRVEVFGCSYKSDIADFDGRSSLLYRFNQKLMSTFKDVVSLKFKSMQEDGVLFHGEGQRGDYITLELQKGKLSLHINLGDSNLHFTNSHTSVTLGSLLDDQHWHSVLIERFNKQVNFTVDKHTQHFRTKGDSDHLDIDYELSFGGIPVPGKPGTFQRKNFHGCIENLYYNGVNIIDLAKRRKPQIYTGNVTFSCSEPQIVPITFVSSSRSYLLLPGTPQIDGLSVSFQFRTWNKDGLLLSTELSENSGSLLVYLHGGRLTLLIQKVAEDPVEISEGTNLHDGLWHSLNINARRHRITLTLDNNAATASHATTVSRIYSGNSYYFGGCPDNFTDSQCLNPITAFQGCMRLIFIDNQPKDLILVQQGSLGNFSDLHIDLCDIKDRCLPNYCEHGGKCSQSWTTFYCDCNDTSYMGATCHNSIYEQSCEAYRHQGKTSDFFYIDSDGSGPLGPLRVFCNITEDKIWTAVQHNNTGLTRVQGAGPEKPYTMSFNYNSSAEQLEAVINSAEYCEQEAAYHCKKSRLLNTPNGIPFAWWVGRANEKHLYWGGSLPGIQQCACGLEESCLDMRYFCNCDADREEWTNDTGLLAFKDHLPVTQIVITDTNRSNSEAAWKIGPLHCYGDRQFWNAASFNTEASYLHFPTFHAEVSADISFFFKTTSLSGVFLENLGMKDFIRVEIRSPKEITFSIDVGNGPTEATVQSPTPLNDNQWHYVRAERNLKQTSLQVDNLPKKVLEAPAEGHFRLQLNSQLFVGGTASRQKGFLGCIRSLHLNGQKLDLEERAKMTPGVKPGCPGHCSSYGNLCHNGGKCVEKYNGYSCDCTSSAYEGPFCKEEVSALFEAGTSITYIFQEPYPVTKNASTSSSAIYADAITSKENIAFSFLTAHAPSLLLYINTYFHEYLAVILSKNGSLQVRYKLSKDGLLIFTIDSGNFANREMHHVKINREGRELIIQVDQVIKLKHNFSEIDFKAIKSLTLGKVTDSLPLDPEVSKANAYGFTGCMSSVWYNHVAPLKAALRHPSIAPVTVKGSLTESSCSSLMETDVNTATTIYSSSDPFGKTDEREPLTNAVRSDSAVIGGVIAVVIFIIFCIIAIMSRFLYQHKQAHRSSQTKEKEYPENLESSFKADIDLQNTVSECKREYFI.

The N-terminal stretch at methionine 1–threonine 22 is a signal peptide. The region spanning alanine 23–cysteine 174 is the F5/8 type C domain. The Extracellular segment spans residues alanine 23–serine 1236. 2 Laminin G-like domains span residues isoleucine 180–cysteine 360 and proline 367–cysteine 544. Cystine bridges form between cysteine 329–cysteine 360, cysteine 512–cysteine 544, cysteine 550–cysteine 561, cysteine 555–cysteine 570, and cysteine 572–cysteine 582. One can recognise an EGF-like 1 domain in the interval isoleucine 546 to histidine 583. The Fibrinogen C-terminal domain occupies asparagine 584–tryptophan 790. One can recognise a Laminin G-like 3 domain in the interval asparagine 791–cysteine 956. 5 cysteine pairs are disulfide-bonded: cysteine 929-cysteine 956, cysteine 960-cysteine 973, cysteine 967-cysteine 982, cysteine 984-cysteine 994, and cysteine 1163-cysteine 1198. The 39-residue stretch at proline 957–lysine 995 folds into the EGF-like 2 domain. The 182-residue stretch at proline 1017–cysteine 1198 folds into the Laminin G-like 4 domain. Residues alanine 1237–methionine 1257 form a helical membrane-spanning segment. At serine 1258–isoleucine 1305 the chain is on the cytoplasmic side.

The protein belongs to the neurexin family. As to expression, expressed in brain.

Its subcellular location is the membrane. In terms of biological role, may play a role in the correct development and proper functioning of the peripheral and central nervous system and be involved in cell adhesion and intercellular communication. The polypeptide is Contactin-associated protein-like 5 (CNTNAP5) (Gallus gallus (Chicken)).